A 512-amino-acid polypeptide reads, in one-letter code: PTS system mannitol-specific EIICB component (512 aa).

Residues 1-28 (MSQTEEKKGIGRRVQAFGSFLSSMIMPN) are Cytoplasmic-facing. Residues 17 to 349 (FGSFLSSMIM…MKFTREPKQD (333 aa)) enclose the PTS EIIC type-2 domain. Residues 29–50 (IGAFIAWGFIAAIFIDNGWLPN) traverse the membrane as a helical segment. The Extracellular segment spans residues 51 to 54 (KDLA). Residues 55 to 75 (TLAGPMITYLIPLLIAFSGGR) traverse the membrane as a helical segment. The Cytoplasmic portion of the chain corresponds to 76–139 (LIYDLRGGII…QGFEMLFNNF (64 aa)). Residues 140 to 161 (SAGILGFIMTIAGFKILAPLMK) traverse the membrane as a helical segment. Residues 162-170 (FIMHILSVA) are Extracellular-facing. Residues 171–191 (VEALVHAHLLPLVSILVEPAK) traverse the membrane as a helical segment. The Cytoplasmic segment spans residues 192 to 278 (IVFLNNAINH…VLMRPLLFIA (87 aa)). Residues 279-298 (VILGGMTGVATYQATGFGFK) traverse the membrane as a helical segment. The Extracellular portion of the chain corresponds to 299–318 (SPASPGSFIVYCLNAPRGEF). A helical membrane pass occupies residues 319-340 (LHMLLGVFLAALVSFVVAALIM). The Cytoplasmic portion of the chain corresponds to 341–512 (KFTREPKQDL…LNNLKKDDQA (172 aa)). The tract at residues 355 to 402 (AQMENTKGKKSSVASKLVSSDKNVNTEENASGNVSETSSSDDDPEALL) is disordered. Residues 365–376 (SSVASKLVSSDK) are compositionally biased toward low complexity. Residues 380–392 (TEENASGNVSETS) are compositionally biased toward polar residues. The PTS EIIB type-2 domain maps to 419-512 (NHVIFACDAG…LNNLKKDDQA (94 aa)). The Phosphocysteine intermediate; for EIIB activity role is filled by Cys425. Position 425 is a phosphocysteine; by EIIA (Cys425).

Homodimer.

Its subcellular location is the cell membrane. The enzyme catalyses D-mannitol(out) + N(pros)-phospho-L-histidyl-[protein] = D-mannitol 1-phosphate(in) + L-histidyl-[protein]. The phosphoenolpyruvate-dependent sugar phosphotransferase system (sugar PTS), a major carbohydrate active transport system, catalyzes the phosphorylation of incoming sugar substrates concomitantly with their translocation across the cell membrane. The enzyme II CmtAB PTS system is involved in D-mannitol transport. This is PTS system mannitol-specific EIICB component (mtlA) from Staphylococcus aureus (strain Mu50 / ATCC 700699).